Here is a 513-residue protein sequence, read N- to C-terminus: Pantetheinase (513 aa).

A signal peptide spans 1 to 21 (MTTQLPAYVAILLFYVSRASC). The N-linked (GlcNAc...) asparagine glycan is linked to N38. The 268-residue stretch at 39–306 (ATLTPVSREE…GKLLLSQLDS (268 aa)) folds into the CN hydrolase domain. E79 (proton acceptor) is an active-site residue. The N-linked (GlcNAc...) asparagine glycan is linked to N130. K178 acts as the Proton donor in catalysis. N200 is a glycosylation site (N-linked (GlcNAc...) asparagine). Catalysis depends on C211, which acts as the Nucleophile. N283, N315, and N353 each carry an N-linked (GlcNAc...) asparagine glycan. The GPI-anchor amidated glycine moiety is linked to residue G491. Positions 492-513 (LTAQARIIMLIVIAPIVCSLSW) are cleaved as a propeptide — removed in mature form.

It belongs to the carbon-nitrogen hydrolase superfamily. BTD/VNN family. As to quaternary structure, monomer. Widely expressed with higher expression in spleen, kidney and blood. Overexpressed in lesional psoriatic skin.

The protein localises to the cell membrane. The catalysed reaction is (R)-pantetheine + H2O = cysteamine + (R)-pantothenate. Amidohydrolase that hydrolyzes specifically one of the carboamide linkages in D-pantetheine thus recycling pantothenic acid (vitamin B5) and releasing cysteamine. The chain is Pantetheinase (VNN1) from Homo sapiens (Human).